Reading from the N-terminus, the 350-residue chain is S-adenosylmethionine:tRNA ribosyltransferase-isomerase (350 aa).

Belongs to the QueA family. As to quaternary structure, monomer.

It is found in the cytoplasm. The catalysed reaction is 7-aminomethyl-7-carbaguanosine(34) in tRNA + S-adenosyl-L-methionine = epoxyqueuosine(34) in tRNA + adenine + L-methionine + 2 H(+). Its pathway is tRNA modification; tRNA-queuosine biosynthesis. In terms of biological role, transfers and isomerizes the ribose moiety from AdoMet to the 7-aminomethyl group of 7-deazaguanine (preQ1-tRNA) to give epoxyqueuosine (oQ-tRNA). The sequence is that of S-adenosylmethionine:tRNA ribosyltransferase-isomerase from Saccharophagus degradans (strain 2-40 / ATCC 43961 / DSM 17024).